Consider the following 259-residue polypeptide: MADS-box protein ZMM17 (259 aa).

One can recognise an MADS-box domain in the interval 1-61 (MGRGKIEIKR…GKMFEYCSPA (61 aa)). The K-box domain maps to 85 to 175 (DQQILLEMTR…YRMINENQQA (91 aa)). The tract at residues 237-259 (PTQPNLQDPAAPCGGLHGHGLQL) is disordered.

As to expression, strong expression in female inflorescences (ears), but also weak expression in male inflorescences (tassels). At early stages of the development of the female spiklet, expressed in all organ primordia but later restricted to the ovule and the developing silk. At very late stages of development, expression becomes restricted to parts of the silk.

It is found in the nucleus. Functionally, probable transcription factor. In Zea mays (Maize), this protein is MADS-box protein ZMM17 (M17).